The following is a 62-amino-acid chain: UPF0337 protein XCC0070 (62 aa).

The interval 32–62 (LEGAAEKNIGKVQRKAGELADDVRDATKSTR) is disordered.

It belongs to the UPF0337 (CsbD) family.

In Xanthomonas campestris pv. campestris (strain ATCC 33913 / DSM 3586 / NCPPB 528 / LMG 568 / P 25), this protein is UPF0337 protein XCC0070.